A 248-amino-acid polypeptide reads, in one-letter code: 1-(5-phosphoribosyl)-5-[(5-phosphoribosylamino)methylideneamino] imidazole-4-carboxamide isomerase (248 aa).

Asp17 serves as the catalytic Proton acceptor. The active-site Proton donor is Asp136.

This sequence belongs to the HisA/HisF family.

The protein localises to the cytoplasm. The catalysed reaction is 1-(5-phospho-beta-D-ribosyl)-5-[(5-phospho-beta-D-ribosylamino)methylideneamino]imidazole-4-carboxamide = 5-[(5-phospho-1-deoxy-D-ribulos-1-ylimino)methylamino]-1-(5-phospho-beta-D-ribosyl)imidazole-4-carboxamide. The protein operates within amino-acid biosynthesis; L-histidine biosynthesis; L-histidine from 5-phospho-alpha-D-ribose 1-diphosphate: step 4/9. The polypeptide is 1-(5-phosphoribosyl)-5-[(5-phosphoribosylamino)methylideneamino] imidazole-4-carboxamide isomerase (Arthrobacter sp. (strain FB24)).